A 777-amino-acid polypeptide reads, in one-letter code: Lon protease (777 aa).

The Lon N-terminal domain occupies 11–204 (IPVLPLRDVV…FLMAIMETEI (194 aa)). ATP is bound at residue 356 to 363 (GPPGVGKT). The Lon proteolytic domain occupies 592–773 (LNQIGQVVGL…EEVLKIALEN (182 aa)). Catalysis depends on residues Ser679 and Lys722.

The protein belongs to the peptidase S16 family. As to quaternary structure, homohexamer. Organized in a ring with a central cavity.

The protein resides in the cytoplasm. The catalysed reaction is Hydrolysis of proteins in presence of ATP.. ATP-dependent serine protease that mediates the selective degradation of mutant and abnormal proteins as well as certain short-lived regulatory proteins. Required for cellular homeostasis and for survival from DNA damage and developmental changes induced by stress. Degrades polypeptides processively to yield small peptide fragments that are 5 to 10 amino acids long. Binds to DNA in a double-stranded, site-specific manner. In Buchnera aphidicola subsp. Schizaphis graminum (strain Sg), this protein is Lon protease.